The primary structure comprises 381 residues: CCN family member 1 (381 aa).

An N-terminal signal peptide occupies residues 1–24; that stretch reads MSSRIARALALVVTLLHLTRLALS. The region spanning 25 to 94 is the IGFBP N-terminal domain; that stretch reads TCPAACHCPL…TALKGICRAQ (70 aa). 6 cysteine pairs are disulfide-bonded: Cys-26-Cys-50, Cys-30-Cys-52, Cys-32-Cys-53, Cys-39-Cys-56, Cys-64-Cys-78, and Cys-70-Cys-91. One can recognise a VWFC domain in the interval 98 to 164; sequence RPCEYNSRIY…GQCCEEWVCD (67 aa). Ser-188 is modified (phosphoserine; by FAM20C). A TSP type-1 domain is found at 228–273; the sequence is KCIVQTTSWSQCSKTCGTGISTRVTNDNPECRLVKETRICEVRPCG. A heparin-binding region spans residues 279-315; the sequence is SLKKGKKCSKTKKSPEPVRFTYAGCLSVKKYRPKYCG. 5 cysteine pairs are disulfide-bonded: Cys-286–Cys-323, Cys-303–Cys-337, Cys-314–Cys-353, Cys-317–Cys-355, and Cys-322–Cys-359. Positions 286-360 constitute a CTCK domain; it reads CSKTKKSPEP…QSCKCNYNCP (75 aa).

Belongs to the CCN family. In terms of assembly, interaction with integrins is heparin- and cell-type-dependent and promotes cell adhesion. In skin fibroblasts it binds ITGA6/ITGB1, in endothelial cells, binds ITGAV/ITGB3 and in platelets, ITGA2B/ITGB3. Binds, in vitro, ITGAV/ITGB5.

It is found in the secreted. Functionally, promotes cell proliferation, chemotaxis, angiogenesis and cell adhesion. Appears to play a role in wound healing by up-regulating, in skin fibroblasts, the expression of a number of genes involved in angiogenesis, inflammation and matrix remodeling including VEGA-A, VEGA-C, MMP1, MMP3, TIMP1, uPA, PAI-1 and integrins alpha-3 and alpha-5. CCN1-mediated gene regulation is dependent on heparin-binding. Down-regulates the expression of alpha-1 and alpha-2 subunits of collagen type-1. Promotes cell adhesion and adhesive signaling through integrin alpha-6/beta-1, cell migration through integrin alpha-v/beta-5 and cell proliferation through integrin alpha-v/beta-3. This chain is CCN family member 1, found in Homo sapiens (Human).